The following is a 391-amino-acid chain: Formate-dependent phosphoribosylglycinamide formyltransferase (391 aa).

Residues 18 to 19 (EL) and E78 each bind N(1)-(5-phospho-beta-D-ribosyl)glycinamide. ATP-binding positions include R110, K151, 156–161 (SSGKGQ), 191–194 (EEFI), and E199. The ATP-grasp domain occupies 115 to 305 (ELAAQQLGVR…EFELHLRAIL (191 aa)). Mg(2+) contacts are provided by E264 and E276. N(1)-(5-phospho-beta-D-ribosyl)glycinamide-binding positions include D283, K353, and 360–361 (RR).

Belongs to the PurK/PurT family. As to quaternary structure, homodimer.

It carries out the reaction N(1)-(5-phospho-beta-D-ribosyl)glycinamide + formate + ATP = N(2)-formyl-N(1)-(5-phospho-beta-D-ribosyl)glycinamide + ADP + phosphate + H(+). It participates in purine metabolism; IMP biosynthesis via de novo pathway; N(2)-formyl-N(1)-(5-phospho-D-ribosyl)glycinamide from N(1)-(5-phospho-D-ribosyl)glycinamide (formate route): step 1/1. Functionally, involved in the de novo purine biosynthesis. Catalyzes the transfer of formate to 5-phospho-ribosyl-glycinamide (GAR), producing 5-phospho-ribosyl-N-formylglycinamide (FGAR). Formate is provided by PurU via hydrolysis of 10-formyl-tetrahydrofolate. The chain is Formate-dependent phosphoribosylglycinamide formyltransferase from Synechocystis sp. (strain ATCC 27184 / PCC 6803 / Kazusa).